The following is a 101-amino-acid chain: Small ribosomal subunit protein uS14A (101 aa).

Belongs to the universal ribosomal protein uS14 family. In terms of assembly, part of the 30S ribosomal subunit. Contacts proteins S3 and S10.

In terms of biological role, binds 16S rRNA, required for the assembly of 30S particles and may also be responsible for determining the conformation of the 16S rRNA at the A site. This is Small ribosomal subunit protein uS14A from Mycolicibacterium smegmatis (strain ATCC 700084 / mc(2)155) (Mycobacterium smegmatis).